Here is a 124-residue protein sequence, read N- to C-terminus: Small ribosomal subunit protein uS12 (124 aa).

Position 89 is a 3-methylthioaspartic acid (D89).

The protein belongs to the universal ribosomal protein uS12 family. Part of the 30S ribosomal subunit. Contacts proteins S8 and S17. May interact with IF1 in the 30S initiation complex.

Its function is as follows. With S4 and S5 plays an important role in translational accuracy. In terms of biological role, interacts with and stabilizes bases of the 16S rRNA that are involved in tRNA selection in the A site and with the mRNA backbone. Located at the interface of the 30S and 50S subunits, it traverses the body of the 30S subunit contacting proteins on the other side and probably holding the rRNA structure together. The combined cluster of proteins S8, S12 and S17 appears to hold together the shoulder and platform of the 30S subunit. The sequence is that of Small ribosomal subunit protein uS12 from Baumannia cicadellinicola subsp. Homalodisca coagulata.